The following is a 75-amino-acid chain: Conotoxin VnMKLT2-012 (75 aa).

Residues 1 to 23 form the signal peptide; sequence MMKLTCVLIIAVLFLTACQLTTA. A propeptide spanning residues 24-45 is cleaved from the precursor; the sequence is ETRDEYRAVRSSDEVRNSRSTR. The segment covering 31 to 45 has biased composition (basic and acidic residues); sequence AVRSSDEVRNSRSTR. Residues 31 to 50 form a disordered region; the sequence is AVRSSDEVRNSRSTRDCSGS. 3 disulfides stabilise this stretch: Cys47–Cys60, Cys54–Cys65, and Cys59–Cys74.

The protein belongs to the conotoxin O1 superfamily. In terms of tissue distribution, expressed by the venom duct.

Its subcellular location is the secreted. In Conus ventricosus (Mediterranean cone), this protein is Conotoxin VnMKLT2-012.